Reading from the N-terminus, the 182-residue chain is Protein Syd (182 aa).

This sequence belongs to the Syd family.

It is found in the cell inner membrane. Its function is as follows. Interacts with the SecY protein in vivo. May bind preferentially to an uncomplexed state of SecY, thus functioning either as a chelating agent for excess SecY in the cell or as a regulatory factor that negatively controls the translocase function. The chain is Protein Syd from Aeromonas salmonicida (strain A449).